Here is a 331-residue protein sequence, read N- to C-terminus: Anthranilate phosphoribosyltransferase (331 aa).

5-phospho-alpha-D-ribose 1-diphosphate contacts are provided by residues glycine 79, 82 to 83 (GD), serine 87, 89 to 92 (NIST), 107 to 115 (KHCNGNISS), and serine 119. Residue glycine 79 participates in anthranilate binding. Position 91 (serine 91) interacts with Mg(2+). Residue asparagine 110 coordinates anthranilate. Residue arginine 165 participates in anthranilate binding. Mg(2+) contacts are provided by aspartate 223 and glutamate 224.

Belongs to the anthranilate phosphoribosyltransferase family. In terms of assembly, homodimer. Mg(2+) serves as cofactor.

The enzyme catalyses N-(5-phospho-beta-D-ribosyl)anthranilate + diphosphate = 5-phospho-alpha-D-ribose 1-diphosphate + anthranilate. Its pathway is amino-acid biosynthesis; L-tryptophan biosynthesis; L-tryptophan from chorismate: step 2/5. Its function is as follows. Catalyzes the transfer of the phosphoribosyl group of 5-phosphorylribose-1-pyrophosphate (PRPP) to anthranilate to yield N-(5'-phosphoribosyl)-anthranilate (PRA). This Buchnera aphidicola subsp. Baizongia pistaciae (strain Bp) protein is Anthranilate phosphoribosyltransferase.